The primary structure comprises 331 residues: Putative heat stress transcription factor A-6a (331 aa).

The interval 135–160 (RRGAGTGSTTPRAVNCGGGGGEGEVE) is disordered. Residues 156 to 238 (EGEVERLRRD…VERKKRRMLA (83 aa)) adopt a coiled-coil conformation. The interval 162–212 (LRRDKEALARELARLRRQQQEARAQLLDMERRVRGTERRQEQCTEFLARAL) is hydrophobic repeat HR-A/B. Positions 230 to 235 (ERKKRR) match the Nuclear localization signal motif. The short motif at 246–253 (LTFEALAL) is the Nuclear export signal element. Positions 270 to 279 (DMIWYELLGE) match the AHA1 motif. An AHA2 motif is present at residues 305–313 (AEPWEEMGE).

It belongs to the HSF family. Class A subfamily. Homotrimer. Post-translationally, exhibits temperature-dependent phosphorylation.

The protein resides in the cytoplasm. It is found in the nucleus. In terms of biological role, transcriptional regulator that specifically binds DNA of heat shock promoter elements (HSE). This Oryza sativa subsp. japonica (Rice) protein is Putative heat stress transcription factor A-6a (HSFA6A).